The primary structure comprises 148 residues: Putative nickel-responsive regulator (148 aa).

Residues His-76, His-87, His-89, and Cys-95 each contribute to the Ni(2+) site.

Belongs to the transcriptional regulatory CopG/NikR family. Ni(2+) serves as cofactor.

Transcriptional regulator. The sequence is that of Putative nickel-responsive regulator from Rhodopseudomonas palustris (strain ATCC BAA-98 / CGA009).